The following is a 438-amino-acid chain: Thymidine phosphorylase (438 aa).

This sequence belongs to the thymidine/pyrimidine-nucleoside phosphorylase family. Homodimer.

The catalysed reaction is thymidine + phosphate = 2-deoxy-alpha-D-ribose 1-phosphate + thymine. It participates in pyrimidine metabolism; dTMP biosynthesis via salvage pathway; dTMP from thymine: step 1/2. In terms of biological role, the enzymes which catalyze the reversible phosphorolysis of pyrimidine nucleosides are involved in the degradation of these compounds and in their utilization as carbon and energy sources, or in the rescue of pyrimidine bases for nucleotide synthesis. In Colwellia psychrerythraea (strain 34H / ATCC BAA-681) (Vibrio psychroerythus), this protein is Thymidine phosphorylase.